We begin with the raw amino-acid sequence, 955 residues long: 26S proteasome non-ATPase regulatory subunit 1 (955 aa).

Residues 279 to 313 are disordered; it reads PGSTNTGTVPGSEKDSDAMEAEEKPGSTCVGKSAE. Basic and acidic residues predominate over residues 290 to 303; that stretch reads SEKDSDAMEAEEKP. 10 PC repeats span residues 403–436, 441–474, 476–510, 511–545, 547–580, 581–616, 617–649, 651–685, 686–726, and 729–761; these read TATA…PGSA, GGLY…DIVR, GGSL…VTGE, AAGL…EKIL, GLAV…ILRR, SGMY…DVRR, AAVE…PHVR, GAAM…YVRQ, GALI…DVMA, and GAIL…PSVV. Disordered stretches follow at residues 839–879 and 932–955; these read AKKK…NFQL and AHGP…YIDD. Basic and acidic residues-rich tracts occupy residues 842–854 and 861–874; these read KEKE…KEEE and TEKK…KEPE. The span at 938–955 shows a compositional bias: acidic residues; sequence EEEEQEPEPPEPFEYIDD.

This sequence belongs to the proteasome subunit S1 family. Component of the 19S proteasome regulatory particle complex. The 26S proteasome consists of a 20S core particle (CP) and two 19S regulatory subunits (RP). The regulatory particle is made of a lid composed of 9 subunits, a base containing 6 ATPases and few additional components including PSMD1. Interacts with ADRM1.

In terms of biological role, component of the 26S proteasome, a multiprotein complex involved in the ATP-dependent degradation of ubiquitinated proteins. This complex plays a key role in the maintenance of protein homeostasis by removing misfolded or damaged proteins, which could impair cellular functions, and by removing proteins whose functions are no longer required. Therefore, the proteasome participates in numerous cellular processes, including cell cycle progression, apoptosis, or DNA damage repair. The polypeptide is 26S proteasome non-ATPase regulatory subunit 1 (PSMD1) (Gallus gallus (Chicken)).